The chain runs to 71 residues: Cold shock-like protein CspB (71 aa).

Residues 7–67 (GLVKWFNADK…GAKGPAAANV (61 aa)) enclose the CSD domain.

Its subcellular location is the cytoplasm. In Escherichia coli (strain K12), this protein is Cold shock-like protein CspB (cspB).